Reading from the N-terminus, the 327-residue chain is GTPase Obg (327 aa).

Residues 1-159 (MKFVDSARIV…LKVDLELKLM (159 aa)) enclose the Obg domain. A disordered region spans residues 120–145 (GGDGGRGNPHFTTSTRQAPRYAEPGG). Residues 160–323 (ADVGLVGFPN…LRNALWNTIN (164 aa)) form the OBG-type G domain. Residues 166 to 173 (GFPNAGKS), 191 to 195 (FTTLV), 213 to 216 (DIPG), 280 to 283 (TKMD), and 304 to 306 (SSI) contribute to the GTP site. 2 residues coordinate Mg(2+): Ser173 and Thr193.

Belongs to the TRAFAC class OBG-HflX-like GTPase superfamily. OBG GTPase family. Monomer. Mg(2+) serves as cofactor.

It localises to the cytoplasm. Its function is as follows. An essential GTPase which binds GTP, GDP and possibly (p)ppGpp with moderate affinity, with high nucleotide exchange rates and a fairly low GTP hydrolysis rate. Plays a role in control of the cell cycle, stress response, ribosome biogenesis and in those bacteria that undergo differentiation, in morphogenesis control. The sequence is that of GTPase Obg from Prosthecochloris aestuarii (strain DSM 271 / SK 413).